Consider the following 265-residue polypeptide: MKPAMETAAEENTEQSQERKGCFECCIKCLGGVPYASLVATILCFSGVALFCGCGHVALAGTVAILEQHFSTNTSDHALLSEVIQLMQYVIYGIASFFFLYGIILLAEGFYTTSAVKELHGEFKTTACGRCISGMFVFLTYVLGVAWLGVFGFSAVPVFMFYNIWSTCEVIKSPQSNGTSGVEQICVDVRQYGIIPWNAFPGKICGSALENICNTNEFYMSYHLFIVACAGAGATVIALLIYMMATTYNYAVLKFKSREDCCPKF.

The chain crosses the membrane as a helical span at residues 31-51; that stretch reads GGVPYASLVATILCFSGVALF. Residue Asn73 is glycosylated (N-linked (GlcNAc...) asparagine). 2 consecutive transmembrane segments (helical) span residues 90-110 and 136-156; these read VIYG…AEGF and FVFL…FSAV. The N-linked (GlcNAc...) asparagine glycan is linked to Asn177. A helical transmembrane segment spans residues 224-244; the sequence is LFIVACAGAGATVIALLIYMM. Ser257 is modified (phosphoserine).

It belongs to the myelin proteolipid protein family. As to quaternary structure, interacts with SERT. In terms of tissue distribution, highly expressed in the ventral medullary surface, moderately in the cerebral cortex and cerebellum, poorly in lung and kidney, and not at all in heart, skeletal muscle, liver, stomach or stomach.

It is found in the membrane. The protein resides in the cell membrane. In terms of biological role, may be involved in neural development. Involved in regulation of osteoblast function and bone formation. Involved in matrix vesicle release by osteoblasts; this function seems to involve maintenance of the actin cytoskeleton. May be involved in cellular trafficking of SERT and thereby in regulation of serotonin uptake. This is Neuronal membrane glycoprotein M6-b (Gpm6b) from Rattus norvegicus (Rat).